The sequence spans 586 residues: CTP synthase (586 aa).

The tract at residues 1–278 (MRKHPQTATK…DAFVVRRLNL (278 aa)) is amidoligase domain. Residue S20 participates in CTP binding. S20 is a binding site for UTP. Residues 21–26 (SLGKGL) and D78 contribute to the ATP site. Residues D78 and E152 each contribute to the Mg(2+) site. CTP-binding positions include 159-161 (DIE), 199-204 (KTKPTQ), and K235. UTP contacts are provided by residues 199–204 (KTKPTQ) and K235. Positions 303 to 551 (RIALVGKYVE…VGAAIDYKAG (249 aa)) constitute a Glutamine amidotransferase type-1 domain. Residue G366 coordinates L-glutamine. C393 functions as the Nucleophile; for glutamine hydrolysis in the catalytic mechanism. Residues 394–397 (LGLQ), E416, and R477 contribute to the L-glutamine site. Residues H524 and E526 contribute to the active site. The tract at residues 560-586 (EIPEHTPNGSSHRDGVGQPLPEPASRG) is disordered.

This sequence belongs to the CTP synthase family. As to quaternary structure, homotetramer.

It carries out the reaction UTP + L-glutamine + ATP + H2O = CTP + L-glutamate + ADP + phosphate + 2 H(+). The enzyme catalyses L-glutamine + H2O = L-glutamate + NH4(+). The catalysed reaction is UTP + NH4(+) + ATP = CTP + ADP + phosphate + 2 H(+). Its pathway is pyrimidine metabolism; CTP biosynthesis via de novo pathway; CTP from UDP: step 2/2. Allosterically activated by GTP, when glutamine is the substrate; GTP has no effect on the reaction when ammonia is the substrate. The allosteric effector GTP functions by stabilizing the protein conformation that binds the tetrahedral intermediate(s) formed during glutamine hydrolysis. Inhibited by the product CTP, via allosteric rather than competitive inhibition. Catalyzes the ATP-dependent amination of UTP to CTP with either L-glutamine or ammonia as the source of nitrogen. Regulates intracellular CTP levels through interactions with the four ribonucleotide triphosphates. This Mycobacterium tuberculosis (strain ATCC 25177 / H37Ra) protein is CTP synthase.